The primary structure comprises 188 residues: Elongation factor P (188 aa).

Belongs to the elongation factor P family.

It localises to the cytoplasm. It functions in the pathway protein biosynthesis; polypeptide chain elongation. In terms of biological role, involved in peptide bond synthesis. Stimulates efficient translation and peptide-bond synthesis on native or reconstituted 70S ribosomes in vitro. Probably functions indirectly by altering the affinity of the ribosome for aminoacyl-tRNA, thus increasing their reactivity as acceptors for peptidyl transferase. The protein is Elongation factor P of Natranaerobius thermophilus (strain ATCC BAA-1301 / DSM 18059 / JW/NM-WN-LF).